The primary structure comprises 223 residues: MSKDVIEYSKLFAKLVNTNDDTKLDDTIASFLYYMFPRELFIRAISLLESSDMFIYILDRVHNKEGNEHTSLIDVLVDEFYKGSSNSLLEYRLIVKDTNDGAPPILVDIAHWFCSCEEFCKYFHEALEKTDEKVELHDVLINEVDDHLQFSDDRFAQLDPHSLSKQWYFKFDKICCSHLLAFSILLRSSINVLKFFTVNSNKVFVIAIDNIDEWLNLHINIVE.

The protein belongs to the SHU2 family. Component of the SHU complex composed of at least CSM2, PSY3, SHU1 and SHU2.

The protein localises to the nucleus. Its function is as follows. Plays a role in a RAD51/RAD54-dependent homologous recombination repair (HRR) pathway to repair MMS-induced lesions during S-phase. Required for error-free repair of spontaneous and induced DNA lesions to protect the genome from mutation. The protein is Suppressor of hydroxyurea sensitivity protein 2 (SHU2) of Saccharomyces cerevisiae (strain AWRI1631) (Baker's yeast).